The chain runs to 1088 residues: Methionine S-methyltransferase (1088 aa).

This sequence belongs to the class I-like SAM-binding methyltransferase superfamily. As to quaternary structure, homotetramer.

It localises to the cytoplasm. It carries out the reaction L-methionine + S-adenosyl-L-methionine = S-methyl-L-methionine + S-adenosyl-L-homocysteine. In terms of biological role, catalyzes the S-methylmethionine (SMM) biosynthesis from adenosyl-L-homocysteine (AdoMet) and methionine. SMM biosynthesis (by MMT1) and degradation (by HMT-1, HMT-2 and HMT-3) constitute the SMM cycle in plants, which is probably required to achieve short term control of AdoMet level. Also able to catalyze the selenium-methylmethionine (SeMM) from AdoMet and selenium-methionine (SeMet). May play a role in phoem sulfur transport; such function is however not essential. This chain is Methionine S-methyltransferase (MMT1), found in Wollastonia biflora (Beach sunflower).